Reading from the N-terminus, the 249-residue chain is Protein ZPS1 (249 aa).

The first 20 residues, 1–20, serve as a signal peptide directing secretion; it reads MKFSSGKSIIFATIASLALS. Asn28, Asn57, Asn98, and Asn217 each carry an N-linked (GlcNAc...) asparagine glycan.

The protein belongs to the ZPS1 family.

The protein is Protein ZPS1 (ZPS1) of Saccharomyces cerevisiae (strain ATCC 204508 / S288c) (Baker's yeast).